The sequence spans 81 residues: Sulfur carrier protein TusA (81 aa).

Cys-19 acts as the Cysteine persulfide intermediate in catalysis.

The protein belongs to the sulfur carrier protein TusA family. Interacts with IscS.

Its subcellular location is the cytoplasm. Its pathway is tRNA modification. Its function is as follows. Sulfur carrier protein involved in sulfur trafficking in the cell. Part of a sulfur-relay system required for 2-thiolation during synthesis of 2-thiouridine of the modified wobble base 5-methylaminomethyl-2-thiouridine (mnm(5)s(2)U) in tRNA. Interacts with IscS and stimulates its cysteine desulfurase activity. Accepts an activated sulfur from IscS, which is then transferred to TusD, and thus determines the direction of sulfur flow from IscS to 2-thiouridine formation. Also appears to be involved in sulfur transfer for the biosynthesis of molybdopterin. The sequence is that of Sulfur carrier protein TusA from Klebsiella pneumoniae subsp. pneumoniae (strain ATCC 700721 / MGH 78578).